The following is a 370-amino-acid chain: NSFL1 cofactor p47 (370 aa).

The interval 54–73 (SQATPSSVSRGTAPSDNRVT) is disordered. A phosphoserine mark is found at S74, S102, S114, and S140. 2 disordered regions span residues 80–116 (HDQDEEEEEEEGQRFYAGGSERSGQQIVGPPRKKSPN) and 138–157 (TKSPGETSKPRPFAGGGYRL). The Nuclear localization signal motif lies at 109 to 115 (PPRKKSP). Position 167 is a phosphotyrosine (Y167). Residues 172–175 (RRRH) carry the Nuclear localization signal motif. Phosphoserine occurs at positions 176, 192, and 272. In terms of domain architecture, SEP spans 179–244 (DVHVVLKLWK…MEDHRDEDFV (66 aa)). In terms of domain architecture, UBX spans 291–368 (EAEPTTNIQI…NLLNAVIVQR (78 aa)).

The protein belongs to the NSFL1C family. In terms of assembly, part of a ternary complex containing STX5A, NSFL1C and VCP. NSFL1C forms a homotrimer that binds to one end of a VCP homohexamer. The complex binds to membranes enriched in phosphatidylethanolamine-containing lipids and promotes Golgi membrane fusion. Interaction with VCIP135 leads to dissociation of the complex via ATP hydrolysis by VCP. Binds ubiquitin and mono-ubiquitinated proteins via its N-terminal UBA-like domain when bound to VCP. Phosphorylated during mitosis. Phosphorylation inhibits interaction with Golgi membranes and is required for the fragmentation of the Golgi stacks during mitosis.

It localises to the nucleus. It is found in the golgi apparatus. Its subcellular location is the golgi stack. The protein resides in the chromosome. The protein localises to the cytoplasm. It localises to the cytoskeleton. It is found in the microtubule organizing center. Its subcellular location is the centrosome. Functionally, reduces the ATPase activity of VCP. Necessary for the fragmentation of Golgi stacks during mitosis and for VCP-mediated reassembly of Golgi stacks after mitosis. May play a role in VCP-mediated formation of transitional endoplasmic reticulum (tER). Inhibits the activity of CTSL (in vitro). Together with UBXN2B/p37, regulates the centrosomal levels of kinase AURKA/Aurora A during mitotic progression by promoting AURKA removal from centrosomes in prophase. Also, regulates spindle orientation during mitosis. This Mus musculus (Mouse) protein is NSFL1 cofactor p47 (Nsfl1c).